Reading from the N-terminus, the 194-residue chain is Inosine triphosphate pyrophosphatase (194 aa).

Thr-10 to Lys-15 contacts ITP. Glu-36 is a Mg(2+) binding site. ITP is bound by residues Lys-48, Asp-66–Thr-67, Lys-83, Lys-166, and His-171–Arg-172.

Belongs to the HAM1 NTPase family. Homodimer. Mg(2+) is required as a cofactor. Requires Mn(2+) as cofactor.

It is found in the cytoplasm. The protein resides in the nucleus. The catalysed reaction is ITP + H2O = IMP + diphosphate + H(+). It carries out the reaction dITP + H2O = dIMP + diphosphate + H(+). It catalyses the reaction XTP + H2O = XMP + diphosphate + H(+). Pyrophosphatase that hydrolyzes non-canonical purine nucleotides such as inosine triphosphate (ITP), deoxyinosine triphosphate (dITP) or xanthosine 5'-triphosphate (XTP) to their respective monophosphate derivatives. The enzyme does not distinguish between the deoxy- and ribose forms. Probably excludes non-canonical purines from RNA and DNA precursor pools, thus preventing their incorporation into RNA and DNA and avoiding chromosomal lesions. In Encephalitozoon intestinalis (strain ATCC 50506) (Microsporidian parasite), this protein is Inosine triphosphate pyrophosphatase.